Consider the following 294-residue polypeptide: N-acetylmuramic acid 6-phosphate etherase (294 aa).

One can recognise an SIS domain in the interval threonine 56–lysine 219. Glutamate 84 acts as the Proton donor in catalysis. Residue glutamate 115 is part of the active site.

The protein belongs to the GCKR-like family. MurNAc-6-P etherase subfamily. As to quaternary structure, homodimer.

It catalyses the reaction N-acetyl-D-muramate 6-phosphate + H2O = N-acetyl-D-glucosamine 6-phosphate + (R)-lactate. The protein operates within amino-sugar metabolism; 1,6-anhydro-N-acetylmuramate degradation. It functions in the pathway amino-sugar metabolism; N-acetylmuramate degradation. It participates in cell wall biogenesis; peptidoglycan recycling. Functionally, specifically catalyzes the cleavage of the D-lactyl ether substituent of MurNAc 6-phosphate, producing GlcNAc 6-phosphate and D-lactate. Together with AnmK, is also required for the utilization of anhydro-N-acetylmuramic acid (anhMurNAc) either imported from the medium or derived from its own cell wall murein, and thus plays a role in cell wall recycling. The polypeptide is N-acetylmuramic acid 6-phosphate etherase (Francisella tularensis subsp. novicida (strain U112)).